Here is a 380-residue protein sequence, read N- to C-terminus: Capsular polysaccharide biosynthesis glycosyltransferase CapM (380 aa).

Belongs to the glycosyltransferase group 1 family. Glycosyltransferase 4 subfamily.

Its pathway is capsule biogenesis; capsule polysaccharide biosynthesis. Required for the biosynthesis of type 1 capsular polysaccharide. This Staphylococcus aureus protein is Capsular polysaccharide biosynthesis glycosyltransferase CapM (capM).